Reading from the N-terminus, the 152-residue chain is Transcriptional regulator MraZ (152 aa).

SpoVT-AbrB domains follow at residues 5–52 (ATLV…PLPE) and 81–124 (ASEC…DETT).

Belongs to the MraZ family. As to quaternary structure, forms oligomers.

The protein localises to the cytoplasm. It localises to the nucleoid. Functionally, negatively regulates its own expression and that of the subsequent genes in the proximal part of the division and cell wall (dcw) gene cluster. Acts by binding directly to DNA. May also regulate the expression of genes outside the dcw cluster. This chain is Transcriptional regulator MraZ, found in Klebsiella pneumoniae (strain 342).